A 147-amino-acid chain; its full sequence is Cyclic di-AMP receptor B (147 aa).

Positions 18–78 (MIEADKVAHV…SIFGLERIEF (61 aa)) constitute a CBS domain. Positions 23, 25, 46, 47, and 131 each coordinate 3',3'-c-di-AMP.

In terms of assembly, homodimer. Forms a homodimer with a parallel, head-to-head assembly of the monomers. Under conditions of potassium starvation and corresponding low c-di-AMP levels, apo-DarB specifically interacts with the N-terminal region of the RelA. Under the same conditions, apo-DarB also specifically interacts with the C-terminal part of the pyruvate carboxylase.

With respect to regulation, binds c-di-AMP. Binding of c-di-AMP to DarB inhibits the interaction with RelA and PYC. Its function is as follows. Involved in the c-di-AMP-dependent regulation of the bacterial stringent response. Modulates the activities of at least two enzymes under conditions of potassium limitation. Apo-DarB regulates the activity of the GTP pyrophosphokinase RelA by interacting directly with RelA, leading to stimulation of (p)ppGpp synthesis and induction of the stringent response. Apo-DarB also regulates pyruvate carboxylase (PYC) at two levels: directly at the protein level by binding to the enzyme and stimulating the synthesis of oxaloacetate and indirectly, by interaction with RelA, which leads to activation of the stringent response and to the increased expression of the pycA gene. Stimulation of these enzymes by DarB is prevented in the presence of cyclic di-AMP (c-di-AMP). In Bacillus subtilis (strain 168), this protein is Cyclic di-AMP receptor B.